Here is a 98-residue protein sequence, read N- to C-terminus: Large ribosomal subunit protein eL30 (98 aa).

Belongs to the eukaryotic ribosomal protein eL30 family.

The polypeptide is Large ribosomal subunit protein eL30 (rpl30e) (Methanothermobacter thermautotrophicus (strain ATCC 29096 / DSM 1053 / JCM 10044 / NBRC 100330 / Delta H) (Methanobacterium thermoautotrophicum)).